We begin with the raw amino-acid sequence, 387 residues long: Homoserine O-succinyltransferase (387 aa).

An AB hydrolase-1 domain is found at 45–354 (NAVLVCHALN…DAPHGHDAFL (310 aa)). The Nucleophile role is filled by serine 151. Arginine 221 is a binding site for substrate. Residues aspartate 317 and histidine 350 contribute to the active site. Residue aspartate 351 participates in substrate binding.

The protein belongs to the AB hydrolase superfamily. MetX family. As to quaternary structure, homodimer.

Its subcellular location is the cytoplasm. The catalysed reaction is L-homoserine + succinyl-CoA = O-succinyl-L-homoserine + CoA. The protein operates within amino-acid biosynthesis; L-methionine biosynthesis via de novo pathway; O-succinyl-L-homoserine from L-homoserine: step 1/1. In terms of biological role, transfers a succinyl group from succinyl-CoA to L-homoserine, forming succinyl-L-homoserine. The sequence is that of Homoserine O-succinyltransferase from Methylibium petroleiphilum (strain ATCC BAA-1232 / LMG 22953 / PM1).